The chain runs to 128 residues: CD59 glycoprotein (128 aa).

Positions 1 to 25 (MGIQGGSVLFGLLLVLAVFCHSGHS) are cleaved as a signal peptide. The 83-residue stretch at 26–108 (LQCYNCPNPT…QLENGGTSLS (83 aa)) folds into the UPAR/Ly6 domain. 5 disulfide bridges follow: C28–C51, C31–C38, C44–C64, C70–C88, and C89–C94. N-linked (GlcNAc...) asparagine glycosylation occurs at N43. N102 carries GPI-anchor amidated asparagine lipidation. The propeptide at 103-128 (GGTSLSEKTVVLLVTLLLAAAWCLHP) is removed in mature form.

Interacts with T-cell surface antigen CD2. In terms of processing, N- and O-glycosylated.

It is found in the cell membrane. The protein localises to the secreted. In terms of biological role, potent inhibitor of the complement membrane attack complex (MAC) action, which protects self-cells from damage during complement activation. Acts by binding to the beta-haipins of C8 (C8A and C8B) components of the assembling MAC, forming an intermolecular beta-sheet that prevents incorporation of the multiple copies of C9 required for complete formation of the osmolytic pore. This is CD59 glycoprotein from Chlorocebus aethiops (Green monkey).